We begin with the raw amino-acid sequence, 1063 residues long: Cellulose synthase A catalytic subunit 7 [UDP-forming] (1063 aa).

At 1-213 (MDTASVTGGE…IPSSKINPYR (213 aa)) the chain is on the cytoplasmic side. Positions 18, 21, 37, 40, 45, 48, 60, and 63 each coordinate Zn(2+). The segment at 18–64 (CRVCGEEVAAREDGKPFVACAECGFPVCKPCYEYERSEGTQCCPQCN) adopts an RING-type; degenerate zinc-finger fold. Residues 116–154 (NGEQPAQKWRPGGPALSSFTGSVAGKDLEQEREMEGGME) form a disordered region. Residues 141–154 (KDLEQEREMEGGME) are compositionally biased toward basic and acidic residues. The helical transmembrane segment at 214–234 (IVIVLRLVVLCFFLKFRITTP) threads the bilayer. The Extracellular segment spans residues 235–237 (AMD). Residues 238–258 (AVPLWLASVICELWFALSWIL) traverse the membrane as a helical segment. Topologically, residues 259 to 845 (DQLPKWSPVT…TNTIVYPFTS (587 aa)) are cytoplasmic. UDP-alpha-D-glucose-binding residues include serine 297, lysine 303, glutamate 304, and aspartate 333. The active site involves aspartate 333. The stretch at 387–414 (VKERRAMKREYEEFKVRINALVAKAQKK) forms a coiled coil. Residue lysine 474 coordinates UDP-alpha-D-glucose. Mn(2+) contacts are provided by lysine 475 and aspartate 499. Aspartate 762 is an active-site residue. A helical membrane pass occupies residues 846-866 (IPLLAYCTIPAVCLLTGKFII). Residues 867–871 (PTLNN) lie on the Extracellular side of the membrane. The chain crosses the membrane as a helical span at residues 872-892 (LASIWFIALFLSIIATGVLEL). The Cytoplasmic segment spans residues 893–907 (RWSGVSIEDWWRNEQ). A helical transmembrane segment spans residues 908–928 (FWVIGGVSAHLFAVFQGLLKV). Over 929 to 959 (LGGVDTNFTVTSKAAADETDAFGELYLFKWT) the chain is Extracellular. N-linked (GlcNAc...) asparagine glycosylation is present at asparagine 935. The chain crosses the membrane as a helical span at residues 960–980 (TLLVPPTTLIIINMVGIVAGV). The Cytoplasmic portion of the chain corresponds to 981–991 (SDAVNNGYGSW). The helical transmembrane segment at 992–1012 (GPLFGKLFFSFWVILHLYPFL) threads the bilayer. Residues 1013–1021 (KGLMGRQNR) are Extracellular-facing. A helical membrane pass occupies residues 1022 to 1042 (TPTIVVLWSILLASIFSLVWV). At 1043-1063 (RIDPFIPKPKGPVLKPCGVSC) the chain is on the cytoplasmic side.

The protein belongs to the glycosyltransferase 2 family. Plant cellulose synthase subfamily. Requires Mn(2+) as cofactor. It depends on Zn(2+) as a cofactor.

It localises to the cell membrane. It catalyses the reaction [(1-&gt;4)-beta-D-glucosyl](n) + UDP-alpha-D-glucose = [(1-&gt;4)-beta-D-glucosyl](n+1) + UDP + H(+). Its pathway is glycan metabolism; plant cellulose biosynthesis. Catalytic subunit of cellulose synthase terminal complexes ('rosettes'), required for beta-1,4-glucan microfibril crystallization, a major mechanism of the cell wall formation. Involved in the secondary cell wall formation. This is Cellulose synthase A catalytic subunit 7 [UDP-forming] (CESA7) from Oryza sativa subsp. japonica (Rice).